A 485-amino-acid chain; its full sequence is E3 ubiquitin-protein ligase TRIM68 (485 aa).

An RING-type zinc finger spans residues 16–61 (CPICMTFLREPMSIDCGHSFCHSCLSGLWEIPGESQNWGYTCPLCR). The B box-type zinc finger occupies 93–134 (LKGDLCERHGEKLKMFCKEDVLIMCEACSQSPEHEAHSVVPM). Zn(2+) contacts are provided by Cys98, His101, Cys120, and His126. The stretch at 207–239 (AEVAAALASLQREAAETMQKLELNHSELIQQSQ) forms a coiled coil. The B30.2/SPRY domain maps to 285–481 (LKTDCRVLGL…NTAPLAICSL (197 aa)).

It belongs to the TRIM/RBCC family. In terms of assembly, interacts with AR/androgen receptor (via ligand-binding domain). Interacts with KAT5/TIP60. Post-translationally, auto-ubiquitinated. As to expression, widely expressed. Expressed at high levels in prostate cancer cell lines. Up-regulation could be restricted to androgen-dependent cells.

It is found in the cytoplasm. The protein resides in the perinuclear region. It localises to the nucleus. It catalyses the reaction S-ubiquitinyl-[E2 ubiquitin-conjugating enzyme]-L-cysteine + [acceptor protein]-L-lysine = [E2 ubiquitin-conjugating enzyme]-L-cysteine + N(6)-ubiquitinyl-[acceptor protein]-L-lysine.. It participates in protein modification; protein ubiquitination. Functions as a ubiquitin E3 ligase. Acts as a coactivator of androgen receptor (AR) depending on its ubiquitin ligase activity. This Homo sapiens (Human) protein is E3 ubiquitin-protein ligase TRIM68 (TRIM68).